The primary structure comprises 384 residues: Anhydro-N-acetylmuramic acid kinase (384 aa).

9-16 (GTSYDAID) serves as a coordination point for ATP.

The protein belongs to the anhydro-N-acetylmuramic acid kinase family.

It catalyses the reaction 1,6-anhydro-N-acetyl-beta-muramate + ATP + H2O = N-acetyl-D-muramate 6-phosphate + ADP + H(+). Its pathway is amino-sugar metabolism; 1,6-anhydro-N-acetylmuramate degradation. It participates in cell wall biogenesis; peptidoglycan recycling. Functionally, catalyzes the specific phosphorylation of 1,6-anhydro-N-acetylmuramic acid (anhMurNAc) with the simultaneous cleavage of the 1,6-anhydro ring, generating MurNAc-6-P. Is required for the utilization of anhMurNAc either imported from the medium or derived from its own cell wall murein, and thus plays a role in cell wall recycling. This chain is Anhydro-N-acetylmuramic acid kinase, found in Streptomyces avermitilis (strain ATCC 31267 / DSM 46492 / JCM 5070 / NBRC 14893 / NCIMB 12804 / NRRL 8165 / MA-4680).